A 270-amino-acid polypeptide reads, in one-letter code: 4-hydroxy-tetrahydrodipicolinate reductase (270 aa).

NAD(+) contacts are provided by residues 11–16 (GASGRM) and glutamate 37. Residue arginine 38 coordinates NADP(+). NAD(+)-binding positions include 101 to 103 (GTT) and 125 to 128 (SPNM). Catalysis depends on histidine 158, which acts as the Proton donor/acceptor. Histidine 159 is a (S)-2,3,4,5-tetrahydrodipicolinate binding site. Lysine 162 serves as the catalytic Proton donor. 168 to 169 (GT) contributes to the (S)-2,3,4,5-tetrahydrodipicolinate binding site.

It belongs to the DapB family.

It localises to the cytoplasm. It carries out the reaction (S)-2,3,4,5-tetrahydrodipicolinate + NAD(+) + H2O = (2S,4S)-4-hydroxy-2,3,4,5-tetrahydrodipicolinate + NADH + H(+). The enzyme catalyses (S)-2,3,4,5-tetrahydrodipicolinate + NADP(+) + H2O = (2S,4S)-4-hydroxy-2,3,4,5-tetrahydrodipicolinate + NADPH + H(+). The protein operates within amino-acid biosynthesis; L-lysine biosynthesis via DAP pathway; (S)-tetrahydrodipicolinate from L-aspartate: step 4/4. Its function is as follows. Catalyzes the conversion of 4-hydroxy-tetrahydrodipicolinate (HTPA) to tetrahydrodipicolinate. The chain is 4-hydroxy-tetrahydrodipicolinate reductase from Shewanella denitrificans (strain OS217 / ATCC BAA-1090 / DSM 15013).